The following is a 43-amino-acid chain: Bacteriocin mundticin (43 aa).

Cys-9 and Cys-14 are oxidised to a cystine.

In terms of biological role, this bacteriocin inhibits the growth of several Gram-positive bacteria, especially pathogenic L.monocytogenes and C.botulinum but has no effect on the growth of a number of yeasts and Gram-negative bacteria. This Enterococcus mundtii protein is Bacteriocin mundticin.